Consider the following 126-residue polypeptide: MIKEFKEFIARGNVIDLAVGVIIGSAFTAIVKSLTDNLINPLIGIFLGKVDLSNLKFSIGDATFKYGSFLNAIINFFIVAIVVFILVKIINKVVKNEPEEPEEEEVDVSAQYLEEIRDLLKEQAKK.

The next 2 membrane-spanning stretches (helical) occupy residues 14–34 (VIDL…VKSL) and 67–87 (GSFL…FILV).

It belongs to the MscL family. In terms of assembly, homopentamer.

It localises to the cell membrane. Its function is as follows. Channel that opens in response to stretch forces in the membrane lipid bilayer. May participate in the regulation of osmotic pressure changes within the cell. This Lactiplantibacillus plantarum (strain ATCC BAA-793 / NCIMB 8826 / WCFS1) (Lactobacillus plantarum) protein is Large-conductance mechanosensitive channel.